Consider the following 406-residue polypeptide: Phosphopentomutase (406 aa).

6 residues coordinate Mn(2+): aspartate 10, aspartate 305, histidine 310, aspartate 346, histidine 347, and histidine 358.

Belongs to the phosphopentomutase family. The cofactor is Mn(2+).

The protein localises to the cytoplasm. The enzyme catalyses 2-deoxy-alpha-D-ribose 1-phosphate = 2-deoxy-D-ribose 5-phosphate. The catalysed reaction is alpha-D-ribose 1-phosphate = D-ribose 5-phosphate. It participates in carbohydrate degradation; 2-deoxy-D-ribose 1-phosphate degradation; D-glyceraldehyde 3-phosphate and acetaldehyde from 2-deoxy-alpha-D-ribose 1-phosphate: step 1/2. Isomerase that catalyzes the conversion of deoxy-ribose 1-phosphate (dRib-1-P) and ribose 1-phosphate (Rib-1-P) to deoxy-ribose 5-phosphate (dRib-5-P) and ribose 5-phosphate (Rib-5-P), respectively. This chain is Phosphopentomutase, found in Vibrio cholerae serotype O1 (strain ATCC 39315 / El Tor Inaba N16961).